Here is a 101-residue protein sequence, read N- to C-terminus: MYKMKRNTLFVRQSCVSSSRIGTQLPLNKSKIYTSSSINITNYKQDQKLYTRHYYTNGKIFENKKVDQYLKVTEEMVFSFMNGFTDGCICGTIIILCLINT.

The chain crosses the membrane as a helical span at residues 77–99 (VFSFMNGFTDGCICGTIIILCLI).

The protein localises to the membrane. This is an uncharacterized protein from Acanthamoeba polyphaga mimivirus (APMV).